Here is an 80-residue protein sequence, read N- to C-terminus: Large ribosomal subunit protein uL24 (80 aa).

The protein belongs to the universal ribosomal protein uL24 family. Part of the 50S ribosomal subunit.

In terms of biological role, one of two assembly initiator proteins, it binds directly to the 5'-end of the 23S rRNA, where it nucleates assembly of the 50S subunit. Functionally, one of the proteins that surrounds the polypeptide exit tunnel on the outside of the subunit. The polypeptide is Large ribosomal subunit protein uL24 (Chlorobium phaeobacteroides (strain DSM 266 / SMG 266 / 2430)).